Consider the following 389-residue polypeptide: Na(+)/H(+) antiporter NhaA (389 aa).

11 consecutive transmembrane segments (helical) span residues 14–34 (AGGI…NSPL), 59–79 (LILW…GLEV), 95–115 (SLPT…YLLF), 124–144 (AGWA…MALL), 154–174 (VFLL…IALF), 177–197 (TDLS…LVGL), 213–233 (LILW…GVII), 257–277 (PWST…VYVG), 292–312 (IALG…YIAV), 328–348 (IAPV…IASL), and 363–383 (LGTL…LSKV).

It belongs to the NhaA Na(+)/H(+) (TC 2.A.33) antiporter family.

The protein localises to the cell inner membrane. The enzyme catalyses Na(+)(in) + 2 H(+)(out) = Na(+)(out) + 2 H(+)(in). Functionally, na(+)/H(+) antiporter that extrudes sodium in exchange for external protons. This is Na(+)/H(+) antiporter NhaA from Shewanella baltica (strain OS223).